Here is a 604-residue protein sequence, read N- to C-terminus: Zinc finger protein chinmo (604 aa).

Residues 32-98 (ADVILSCDGV…MYKGEVHVSQ (67 aa)) form the BTB domain. Disordered regions lie at residues 122-155 (RLAAQQAQQHMGDLSPLDSPTGRRSVRNSLSGGS), 291-310 (CDSLMHPGGSSSSSGMGYTH), 330-437 (RSPY…DEST), and 450-470 (NLKYSPPPPPNSNTSSTTPNT). Residues 364–374 (PSSSASSTAPT) are compositionally biased toward low complexity. The span at 384 to 409 (ASPQSSRYENHSPSTTAGNGNATSSL) shows a compositional bias: polar residues. Acidic residues predominate over residues 425 to 437 (ANDDDRELMDEST). Residues 461–470 (SNTSSTTPNT) show a composition bias toward low complexity. 2 C2H2-type zinc fingers span residues 517 to 540 (LKCLYCDRLYGYETNLRAHIRQRH) and 545 to 568 (VPCPFCERTFTRNNTVRRHIAREH).

In terms of tissue distribution, broadly expressed in the developing larval central nervous system (at protein level). Expressed in the larval lymph gland and circulating hemocytes (at protein level). Expressed in all cell types of the adult testis stem cell niche but not detected in somatic cells of the adult ovary (at protein level). In the testis, expressed at high levels in cyst stem cells and early cyst cells and, at lower levels, in germline stem cells (at protein level).

The protein resides in the nucleus. Required for morphological differentiation of postmitotic neurons during postembryonic brain development. Ensures production of appropriate neuron subtypes within a lineage by preventing precocious generation of late neuronal types of that lineage. Acts as a downstream mediator of the transcriptional activator Stat92e and is required for the development of the eye-antennal disk which gives rise to the adult eye, antenna and head capsule, for transcriptional repression of the Notch receptor ligand Ser and for the self-renewal of cyst stem cells in the testis. In the adult testis, maintains the male identify of adult somatic cyst stem cells. Represses expression and alternative splicing of transformer pre-mRNA, resulting in the production of the male-specific isoform of transcription factor dsx which ensures male-specific transcription of target genes. Plays a role in actin nuclear localization through its involvement in repressing the expression of the kinase Cdi. This maintains the cofilin/actin-depolymerizing factor homolog tsr in its unphosphorylated state which is required for actin nuclear import. The polypeptide is Zinc finger protein chinmo (Drosophila melanogaster (Fruit fly)).